The primary structure comprises 263 residues: N-acyl homoserine lactonase AttM (263 aa).

Positions 103, 105, 107, 108, 180, 202, and 247 each coordinate Zn(2+).

It belongs to the metallo-beta-lactamase superfamily. The cofactor is Zn(2+).

The enzyme catalyses an N-acyl-L-homoserine lactone + H2O = an N-acyl-L-homoserine + H(+). In Agrobacterium fabrum (strain C58 / ATCC 33970) (Agrobacterium tumefaciens (strain C58)), this protein is N-acyl homoserine lactonase AttM.